A 267-amino-acid chain; its full sequence is Tryptophan synthase alpha chain (267 aa).

Catalysis depends on proton acceptor residues glutamate 49 and aspartate 60.

Belongs to the TrpA family. As to quaternary structure, tetramer of two alpha and two beta chains.

It catalyses the reaction (1S,2R)-1-C-(indol-3-yl)glycerol 3-phosphate + L-serine = D-glyceraldehyde 3-phosphate + L-tryptophan + H2O. It participates in amino-acid biosynthesis; L-tryptophan biosynthesis; L-tryptophan from chorismate: step 5/5. Functionally, the alpha subunit is responsible for the aldol cleavage of indoleglycerol phosphate to indole and glyceraldehyde 3-phosphate. This Acaryochloris marina (strain MBIC 11017) protein is Tryptophan synthase alpha chain.